Reading from the N-terminus, the 234-residue chain is Cell polarity protein alp11 (234 aa).

In terms of domain architecture, Ubiquitin-like spans 4-88 (ITLFIKSSSA…IVVEDTRPPH (85 aa)). The region spanning 174–216 (VPEINNDNLWVGVEFDEPVGKNDGTVSGKRYFNAKNKHGSFLR) is the CAP-Gly domain. Ser213 carries the post-translational modification Phosphoserine.

It belongs to the TBCB family. Binds to monomeric alpha-tubulin. Interacts with alp21.

Its subcellular location is the cytoplasm. The protein localises to the cytoskeleton. In terms of biological role, required for microtubule function and cell polarity. Involved in the proper folding of alpha-tubulin. In Schizosaccharomyces pombe (strain 972 / ATCC 24843) (Fission yeast), this protein is Cell polarity protein alp11 (alp11).